A 740-amino-acid polypeptide reads, in one-letter code: Protein SIEVE ELEMENT OCCLUSION B (740 aa).

The span at 1–23 shows a compositional bias: polar residues; the sequence is MESLIKSQHAQQLAGHKNTTGKT. A disordered region spans residues 1–27; it reads MESLIKSQHAQQLAGHKNTTGKTPSME.

As to quaternary structure, can form homodimer. In terms of tissue distribution, expressed in phloem sieve elements.

Scaffold protein required to form the phloem filament matrix in sieve elements. The chain is Protein SIEVE ELEMENT OCCLUSION B from Arabidopsis thaliana (Mouse-ear cress).